The sequence spans 91 residues: Molybdopterin synthase sulfur carrier subunit (91 aa).

Position 91 is a 1-thioglycine; alternate (G91). G91 carries the glycyl adenylate; alternate modification.

This sequence belongs to the MoaD family. MOCS2A subfamily. In terms of assembly, heterotetramer; composed of 2 small (MOCS2A) and 2 large (MOCS2B) subunits. Post-translationally, C-terminal thiocarboxylation occurs in 2 steps, it is first acyl-adenylated (-COAMP) via the hesA/moeB/thiF part of MOCS3, then thiocarboxylated (-COSH) via the rhodanese domain of MOCS3.

The protein resides in the cytoplasm. The protein operates within cofactor biosynthesis; molybdopterin biosynthesis. Acts as a sulfur carrier required for molybdopterin biosynthesis. Component of the molybdopterin synthase complex that catalyzes the conversion of precursor Z into molybdopterin by mediating the incorporation of 2 sulfur atoms into precursor Z to generate a dithiolene group. In the complex, serves as sulfur donor by being thiocarboxylated (-COSH) at its C-terminus by MOCS3. After interaction with MOCS2B, the sulfur is then transferred to precursor Z to form molybdopterin. In Anopheles gambiae (African malaria mosquito), this protein is Molybdopterin synthase sulfur carrier subunit.